The sequence spans 211 residues: Interleukin-6 (211 aa).

A signal peptide spans 1–24; the sequence is MKFLSARDFHPVAFLGLMLVTTTA. 2 cysteine pairs are disulfide-bonded: C70/C76 and C99/C109.

Belongs to the IL-6 superfamily. As to quaternary structure, component of a hexamer of two molecules each of IL6, IL6R and IL6ST; first binds to IL6R to associate with the signaling subunit IL6ST. Interacts with IL6R (via the N-terminal ectodomain); this interaction may be affected by IL6R-binding with SORL1, hence decreasing IL6 cis signaling. Interacts with SORL1 (via the N-terminal ectodomain); this interaction leads to IL6 internalization and lysosomal degradation. May form a trimeric complex with the soluble SORL1 ectodomain and soluble IL6R receptor; this interaction might stabilize circulating IL6, hence promoting IL6 trans signaling. In terms of processing, N- and O-glycosylated. Expressed by dendritic cells and macrophages. Expressed by activated follicular B cells. Abundantly expressed in the central nervous system (CNS), particularly the hypothalamic region.

It is found in the secreted. Its function is as follows. Cytokine with a wide variety of biological functions in immunity, tissue regeneration, and metabolism. Binds to IL6R, then the complex associates to the signaling subunit IL6ST/gp130 to trigger the intracellular IL6-signaling pathway. The interaction with the membrane-bound IL6R and IL6ST stimulates 'classic signaling', whereas the binding of IL6 and soluble IL6R to IL6ST stimulates 'trans-signaling'. Alternatively, 'cluster signaling' occurs when membrane-bound IL6:IL6R complexes on transmitter cells activate IL6ST receptors on neighboring receiver cells. In terms of biological role, IL6 is a potent inducer of the acute phase response. Rapid production of IL6 contributes to host defense during infection and tissue injury, but excessive IL6 synthesis is involved in disease pathology. In the innate immune response, is synthesized by myeloid cells, such as macrophages and dendritic cells, upon recognition of pathogens through toll-like receptors (TLRs) at the site of infection or tissue injury. In the adaptive immune response, is required for the differentiation of B-cells into immunoglolin-secreting cells. Plays a major role in the differentiation of CD4(+) T cell subsets. Essential factor for the development of T follicular helper (Tfh) cells that are required for the induction of germinal-center formation. Together with IL21, controls the early generation of Tfh cells and are critical for an effective antibody response to acute viral infection. Required to drive naive CD4(+) T cells to the Th17 lineage, through 'cluster signaling' by dendritic cells. Also required for proliferation of myeloma cells and the survival of plasmablast cells. Acts as an essential factor in bone homeostasis and on vessels directly or indirectly by induction of VEGF, resulting in increased angiogenesis activity and vascular permeability. Induces, through 'trans-signaling' and synergistically with IL1B and TNF, the production of VEGF. Involved in metabolic controls, is discharged into the bloodstream after muscle contraction increasing lipolysis and improving insulin resistance. 'Trans-signaling' in central nervous system regulates energy and glucose homeostasis. Mediates, through GLP-1, crosstalk between insulin-sensitive tissues, intestinal L cells and pancreatic islets to adapt to changes in insulin demand. Also acts as a myokine. Plays a protective role during liver injury, being required for maintenance of tissue regeneration. Also has a pivotal role in iron metabolism by regulating HAMP/hepcidin expression upon inflammation or bacterial infection. Through activation of IL6ST-YAP-NOTCH pathway, induces inflammation-induced epithelial regeneration. This is Interleukin-6 from Mus musculus (Mouse).